The sequence spans 118 residues: MICOS complex subunit MIC13 (118 aa).

Residues 1 to 7 (MVARVWS) lie on the Mitochondrial matrix side of the membrane. A helical membrane pass occupies residues 8–26 (LMRFLIKGSVAGGAVYLVY). Over 27 to 118 (DQELLGPSDK…GWEYVKARTK (92 aa)) the chain is Mitochondrial intermembrane.

The protein belongs to the MICOS complex subunit Mic13 family. In terms of assembly, component of the mitochondrial contact site and cristae organizing system (MICOS) complex, composed of at least MICOS10/MIC10, CHCHD3/MIC19, CHCHD6/MIC25, APOO/MIC26, MICOS13/MIC13, APOOL/MIC27 and IMMT/MIC60. The complex associates with mitochondrial outer membrane proteins SAMM50, MTX1 and MTX2, and with HSPA9.

It localises to the mitochondrion inner membrane. In terms of biological role, component of the MICOS complex, a large protein complex of the mitochondrial inner membrane that plays crucial roles in the maintenance of crista junctions, inner membrane architecture, and formation of contact sites to the outer membrane. Constituent of mature MICOS complex, it is required for the formation of cristae junction (CJ) and maintenance of cristae morphology. Required for the incorporation of MICOS10/MIC10 into the MICOS complex. The sequence is that of MICOS complex subunit MIC13 from Macaca fascicularis (Crab-eating macaque).